The following is a 439-amino-acid chain: ATP-dependent RNA helicase RhlB (439 aa).

The short motif at 9–37 (QKFADLPLHPEVKQALAENGFEFCTPIQA) is the Q motif element. Residues 40–219 (LPVLLQSKDI…YDHMNEPVKV (180 aa)) enclose the Helicase ATP-binding domain. Residue 53–60 (AQTGTGKT) coordinates ATP. A DEAD box motif is present at residues 165–168 (DEAD). The Helicase C-terminal domain maps to 243-390 (KMRLLLTLIE…VSNYDRDALL (148 aa)). Residues 395–439 (PPVKIHRRHPAGARNLRERSGAGRPQGAHRSGGRPPRHDRTRRQP) form a disordered region. Basic residues predominate over residues 425 to 439 (SGGRPPRHDRTRRQP).

Belongs to the DEAD box helicase family. RhlB subfamily. Component of the RNA degradosome, which is a multiprotein complex involved in RNA processing and mRNA degradation.

Its subcellular location is the cytoplasm. It carries out the reaction ATP + H2O = ADP + phosphate + H(+). Functionally, DEAD-box RNA helicase involved in RNA degradation. Has RNA-dependent ATPase activity and unwinds double-stranded RNA. The protein is ATP-dependent RNA helicase RhlB of Shewanella sp. (strain ANA-3).